A 92-amino-acid polypeptide reads, in one-letter code: PqqA binding protein (92 aa).

It belongs to the PqqD family. In terms of assembly, monomer. Interacts with PqqE.

The protein operates within cofactor biosynthesis; pyrroloquinoline quinone biosynthesis. In terms of biological role, functions as a PqqA binding protein and presents PqqA to PqqE, in the pyrroloquinoline quinone (PQQ) biosynthetic pathway. The protein is PqqA binding protein of Xanthomonas campestris pv. campestris (strain 8004).